A 470-amino-acid polypeptide reads, in one-letter code: Carboxypeptidase Q (470 aa).

Residues 1–18 form the signal peptide; it reads MRSLFFLFIVHLLALGSG. Residues 19 to 42 constitute a propeptide that is removed on maturation; the sequence is KAVFKNGVSQRTFREIKEEIANYE. N-linked (GlcNAc...) asparagine glycosylation occurs at Asn-59. 2 residues coordinate Zn(2+): His-288 and Asp-300. Glu-334 acts as the Nucleophile in catalysis. Residue Glu-335 coordinates Zn(2+). Asn-351 is a glycosylation site (N-linked (GlcNAc...) asparagine). Asp-362 lines the Zn(2+) pocket. N-linked (GlcNAc...) asparagine glycosylation occurs at Asn-394. His-432 is a binding site for Zn(2+).

The protein belongs to the peptidase M28 family. As to quaternary structure, homodimer. The monomeric form is inactive while the homodimer is active. N-glycosylated. The secreted form is modified by hybrid or complex type oligosaccharide chains.

The protein localises to the endoplasmic reticulum. It is found in the golgi apparatus. It localises to the lysosome. The protein resides in the secreted. Functionally, carboxypeptidase that may play an important role in the hydrolysis of circulating peptides. Catalyzes the hydrolysis of dipeptides with unsubstituted terminals into amino acids. May play a role in the liberation of thyroxine hormone from its thyroglobulin (Tg) precursor. In Mus musculus (Mouse), this protein is Carboxypeptidase Q (Cpq).